The chain runs to 312 residues: Ribonuclease Z (312 aa).

H62, H64, D66, H67, H144, D215, and H273 together coordinate Zn(2+). Residue D66 is the Proton acceptor of the active site.

Belongs to the RNase Z family. Homodimer. Requires Zn(2+) as cofactor.

It catalyses the reaction Endonucleolytic cleavage of RNA, removing extra 3' nucleotides from tRNA precursor, generating 3' termini of tRNAs. A 3'-hydroxy group is left at the tRNA terminus and a 5'-phosphoryl group is left at the trailer molecule.. In terms of biological role, zinc phosphodiesterase, which displays some tRNA 3'-processing endonuclease activity. Probably involved in tRNA maturation, by removing a 3'-trailer from precursor tRNA. The protein is Ribonuclease Z of Prochlorococcus marinus (strain AS9601).